Reading from the N-terminus, the 307-residue chain is Small ribosomal subunit protein bS1 (307 aa).

S1 motif domains lie at 32–101 (GDTV…LSIR), 119–183 (DATV…LSHR), and 197–265 (GEVV…LSTK).

It belongs to the bacterial ribosomal protein bS1 family.

In terms of biological role, binds mRNA. The polypeptide is Small ribosomal subunit protein bS1 (rpsA) (Synechococcus sp. (strain ATCC 27144 / PCC 6301 / SAUG 1402/1) (Anacystis nidulans)).